Here is a 368-residue protein sequence, read N- to C-terminus: Peptide chain release factor 2 (368 aa).

N5-methylglutamine is present on Gln-245.

Belongs to the prokaryotic/mitochondrial release factor family. Methylated by PrmC. Methylation increases the termination efficiency of RF2.

Its subcellular location is the cytoplasm. Peptide chain release factor 2 directs the termination of translation in response to the peptide chain termination codons UGA and UAA. The polypeptide is Peptide chain release factor 2 (prfB) (Treponema pallidum (strain Nichols)).